We begin with the raw amino-acid sequence, 389 residues long: Succinyl-diaminopimelate desuccinylase (389 aa).

H72 is a binding site for Zn(2+). Residue D74 is part of the active site. D105 serves as a coordination point for Zn(2+). E144 acts as the Proton acceptor in catalysis. E145, E173, and H362 together coordinate Zn(2+).

Belongs to the peptidase M20A family. DapE subfamily. Homodimer. Zn(2+) is required as a cofactor. It depends on Co(2+) as a cofactor.

It catalyses the reaction N-succinyl-(2S,6S)-2,6-diaminopimelate + H2O = (2S,6S)-2,6-diaminopimelate + succinate. It functions in the pathway amino-acid biosynthesis; L-lysine biosynthesis via DAP pathway; LL-2,6-diaminopimelate from (S)-tetrahydrodipicolinate (succinylase route): step 3/3. Its function is as follows. Catalyzes the hydrolysis of N-succinyl-L,L-diaminopimelic acid (SDAP), forming succinate and LL-2,6-diaminopimelate (DAP), an intermediate involved in the bacterial biosynthesis of lysine and meso-diaminopimelic acid, an essential component of bacterial cell walls. The protein is Succinyl-diaminopimelate desuccinylase of Rhodopseudomonas palustris (strain HaA2).